Consider the following 341-residue polypeptide: Ferrochelatase (341 aa).

2 residues coordinate Fe cation: histidine 210 and glutamate 291.

The protein belongs to the ferrochelatase family.

It localises to the cytoplasm. The enzyme catalyses heme b + 2 H(+) = protoporphyrin IX + Fe(2+). It participates in porphyrin-containing compound metabolism; protoheme biosynthesis; protoheme from protoporphyrin-IX: step 1/1. Catalyzes the ferrous insertion into protoporphyrin IX. The sequence is that of Ferrochelatase from Alcanivorax borkumensis (strain ATCC 700651 / DSM 11573 / NCIMB 13689 / SK2).